Consider the following 334-residue polypeptide: GTPase Obg (334 aa).

Positions 1 to 159 constitute an Obg domain; that stretch reads MRFVDEVVIK…KEVRLELNLL (159 aa). Positions 160–331 constitute an OBG-type G domain; the sequence is ADVALLGLPN…LAKKLNEFLQ (172 aa). GTP contacts are provided by residues 166–173, 191–195, 212–215, 282–285, and 312–314; these read GLPNAGKS, FTTMY, DIPG, NKID, and SAA. Mg(2+) contacts are provided by serine 173 and threonine 193.

This sequence belongs to the TRAFAC class OBG-HflX-like GTPase superfamily. OBG GTPase family. As to quaternary structure, monomer. It depends on Mg(2+) as a cofactor.

The protein localises to the cytoplasm. An essential GTPase which binds GTP, GDP and possibly (p)ppGpp with moderate affinity, with high nucleotide exchange rates and a fairly low GTP hydrolysis rate. Plays a role in control of the cell cycle, stress response, ribosome biogenesis and in those bacteria that undergo differentiation, in morphogenesis control. The chain is GTPase Obg from Francisella tularensis subsp. holarctica (strain FTNF002-00 / FTA).